Reading from the N-terminus, the 356-residue chain is NADH-quinone oxidoreductase subunit H (356 aa).

A run of 8 helical transmembrane segments spans residues 18 to 38, 87 to 107, 120 to 140, 166 to 186, 205 to 225, 265 to 285, 292 to 312, and 333 to 353; these read IVMIAQSVLLLVVLLVAIAYI, GVFLLAPLVSCVLALAAWAVI, VGILFIFAISSLSIYGIIMAG, IGFVIITVLLCAGTLNLSAVV, ILNWYVWPLFPMFVVFYVSAL, AITTMCALATILFLGGWLPPI, WVPGVIWFALKLFFMFFLIAM, and FLPLSLVMVVIVAGVLHFAGI.

This sequence belongs to the complex I subunit 1 family. In terms of assembly, NDH-1 is composed of 14 different subunits. Subunits NuoA, H, J, K, L, M, N constitute the membrane sector of the complex.

Its subcellular location is the cell inner membrane. It carries out the reaction a quinone + NADH + 5 H(+)(in) = a quinol + NAD(+) + 4 H(+)(out). NDH-1 shuttles electrons from NADH, via FMN and iron-sulfur (Fe-S) centers, to quinones in the respiratory chain. The immediate electron acceptor for the enzyme in this species is believed to be ubiquinone. Couples the redox reaction to proton translocation (for every two electrons transferred, four hydrogen ions are translocated across the cytoplasmic membrane), and thus conserves the redox energy in a proton gradient. This subunit may bind ubiquinone. The polypeptide is NADH-quinone oxidoreductase subunit H (Bradyrhizobium sp. (strain BTAi1 / ATCC BAA-1182)).